The following is a 488-amino-acid chain: Probable glycine dehydrogenase (decarboxylating) subunit 2 (488 aa).

Lysine 273 is modified (N6-(pyridoxal phosphate)lysine).

The protein belongs to the GcvP family. C-terminal subunit subfamily. The glycine cleavage system is composed of four proteins: P, T, L and H. In this organism, the P 'protein' is a heterodimer of two subunits. Pyridoxal 5'-phosphate is required as a cofactor.

It catalyses the reaction N(6)-[(R)-lipoyl]-L-lysyl-[glycine-cleavage complex H protein] + glycine + H(+) = N(6)-[(R)-S(8)-aminomethyldihydrolipoyl]-L-lysyl-[glycine-cleavage complex H protein] + CO2. Functionally, the glycine cleavage system catalyzes the degradation of glycine. The P protein binds the alpha-amino group of glycine through its pyridoxal phosphate cofactor; CO(2) is released and the remaining methylamine moiety is then transferred to the lipoamide cofactor of the H protein. The polypeptide is Probable glycine dehydrogenase (decarboxylating) subunit 2 (Halalkalibacterium halodurans (strain ATCC BAA-125 / DSM 18197 / FERM 7344 / JCM 9153 / C-125) (Bacillus halodurans)).